Consider the following 672-residue polypeptide: Glycerophosphocholine phosphodiesterase GPCPD1 (672 aa).

Positions 1–115 (MTPSQVAFEI…IIIDDGQFGI (115 aa)) constitute a CBM20 domain. Substrate-binding positions include lysine 70 and 88–89 (HK). 2 positions are modified to phosphoserine: serine 175 and serine 424. Residues 318–618 (PLDVGHRGAG…DRIYDWMPEQ (301 aa)) enclose the GP-PDE domain. Residue tyrosine 608 is modified to Phosphotyrosine.

It belongs to the glycerophosphoryl diester phosphodiesterase family. In terms of tissue distribution, widely expressed, with highest expression in spinal chord.

It is found in the cytoplasm. The protein resides in the cytosol. It catalyses the reaction sn-glycerol 3-phosphocholine + H2O = sn-glycerol 3-phosphate + choline + H(+). Its function is as follows. May be involved in the negative regulation of skeletal muscle differentiation, independently of its glycerophosphocholine phosphodiesterase activity. This Homo sapiens (Human) protein is Glycerophosphocholine phosphodiesterase GPCPD1 (GPCPD1).